The sequence spans 1526 residues: Ig-like and fibronectin type-III domain-containing protein 2 (1526 aa).

An N-terminal signal peptide occupies residues 1 to 19 (MMRWRLAVLFLTLLASTTG). The tract at residues 20-39 (DDTTTKASVSTTTKKGTDGP) is disordered. The Extracellular portion of the chain corresponds to 20-1415 (DDTTTKASVS…RRSASKGSSS (1396 aa)). A compositionally biased stretch (low complexity) spans 24–33 (TKASVSTTTK). The Ig-like C2-type 1 domain maps to 39–170 (PHLTTDDEGF…ELLEFQVEVL (132 aa)). Cysteine 61 and cysteine 154 are disulfide-bonded. Asparagine 87, asparagine 143, asparagine 158, asparagine 181, asparagine 414, asparagine 427, asparagine 475, asparagine 489, asparagine 533, asparagine 590, asparagine 617, and asparagine 662 each carry an N-linked (GlcNAc...) asparagine glycan. The region spanning 379–470 (APRGKRDVDF…VRNIASTNVH (92 aa)) is the Fibronectin type-III 1 domain. A Fibronectin type-III 2 domain is found at 587–678 (APGNVTISEL…TAKLFSTLPT (92 aa)). Residues 682–724 (PLCTIGEPIYMNDGRVMICDAVNPCPNGFRCTGAGSDLSYCCP) form the WR1 domain. Residues asparagine 754, asparagine 871, asparagine 906, asparagine 939, asparagine 979, asparagine 1004, and asparagine 1049 are each glycosylated (N-linked (GlcNAc...) asparagine). Fibronectin type-III domains are found at residues 827 to 914 (AVRN…TKPA) and 924 to 1020 (APEK…AQKD). One can recognise an Ig-like C2-type 2 domain in the interval 1116–1207 (ASVTMKKDKI…SRVEASSEVI (92 aa)). An intrachain disulfide couples cysteine 1137 to cysteine 1190. Asparagine 1250 carries an N-linked (GlcNAc...) asparagine glycan. One can recognise a Fibronectin type-III 5 domain in the interval 1314-1406 (APSEVSNVRI…SAIPKDSEPR (93 aa)). Residues 1416 to 1436 (AFWIVVILVVFGVLIAGLAVL) traverse the membrane as a helical segment. Topologically, residues 1437–1526 (SKRRELPYPI…NGMRYAKLET (90 aa)) are cytoplasmic. Residues 1485-1518 (SATTGTAAATQSEWQSANLEANSTTDNSHEYRNG) are disordered. The segment covering 1495-1510 (QSEWQSANLEANSTTD) has biased composition (polar residues).

It is found in the cell membrane. The chain is Ig-like and fibronectin type-III domain-containing protein 2 from Caenorhabditis elegans.